The chain runs to 130 residues: uncharacterized protein (130 aa).

The signal sequence occupies residues 1 to 26 (MKFIYKLLFILSIVLFLFNNIITING). N-linked (GlcNAc...) asparagine glycosylation occurs at Asn88.

It localises to the secreted. This is an uncharacterized protein from Dictyostelium discoideum (Social amoeba).